The primary structure comprises 426 residues: Enolase (426 aa).

Positions 38-60 (PSGASTGAHEAVEKRDGDKSRYG) are disordered. Residues 47-58 (EAVEKRDGDKSR) show a composition bias toward basic and acidic residues. Gln-163 is a (2R)-2-phosphoglycerate binding site. Glu-205 serves as the catalytic Proton donor. Mg(2+)-binding residues include Asp-242, Glu-285, and Asp-312. Lys-337, Arg-366, Ser-367, and Lys-388 together coordinate (2R)-2-phosphoglycerate. Residue Lys-337 is the Proton acceptor of the active site.

Belongs to the enolase family. Requires Mg(2+) as cofactor.

It is found in the cytoplasm. The protein localises to the secreted. The protein resides in the cell surface. The enzyme catalyses (2R)-2-phosphoglycerate = phosphoenolpyruvate + H2O. It functions in the pathway carbohydrate degradation; glycolysis; pyruvate from D-glyceraldehyde 3-phosphate: step 4/5. Its function is as follows. Catalyzes the reversible conversion of 2-phosphoglycerate (2-PG) into phosphoenolpyruvate (PEP). It is essential for the degradation of carbohydrates via glycolysis. The polypeptide is Enolase (Caulobacter sp. (strain K31)).